A 137-amino-acid chain; its full sequence is Dormancy-associated protein homolog 3 (137 aa).

Disordered regions lie at residues Met1–Pro55 and Lys69–Met137. Positions Phe32–Ala43 are enriched in polar residues. A compositionally biased stretch (low complexity) spans Pro70 to Pro87. Phosphoserine is present on Ser81. The segment covering Pro88–Ser97 has biased composition (pro residues). The segment covering Glu104–Glu118 has biased composition (basic and acidic residues). Residues Gly127–Met137 are compositionally biased toward polar residues.

Belongs to the DRM1/ARP family.

This chain is Dormancy-associated protein homolog 3, found in Arabidopsis thaliana (Mouse-ear cress).